Reading from the N-terminus, the 220-residue chain is Ribonuclease HII (220 aa).

Residues 32–220 (KHIAGIDEAG…FAPIKGRFDC (189 aa)) form the RNase H type-2 domain. A divalent metal cation-binding residues include Asp-38, Glu-39, and Asp-130.

The protein belongs to the RNase HII family. Mn(2+) is required as a cofactor. Mg(2+) serves as cofactor.

The protein localises to the cytoplasm. The enzyme catalyses Endonucleolytic cleavage to 5'-phosphomonoester.. Its function is as follows. Endonuclease that specifically degrades the RNA of RNA-DNA hybrids. This Brucella ovis (strain ATCC 25840 / 63/290 / NCTC 10512) protein is Ribonuclease HII.